The primary structure comprises 480 residues: Glycerol-3-phosphate transporter (480 aa).

Residues 1–36 (MFGPFKPAPHIAELPAEKIDSTYKRLRWQVFAGIFF) are Cytoplasmic-facing. Residues 37–57 (GYAAYYFVRANFDLAQPGLIQ) traverse the membrane as a helical segment. Over 58–64 (AGLYSKA) the chain is Periplasmic. The chain crosses the membrane as a helical span at residues 65–85 (ELGVIGSAAGLAYGLSKFVMA). Over 86–94 (GMSDRSNPR) the chain is Cytoplasmic. Residues 95–113 (VFLPFGLLLSGLCMTLMGL) form a helical membrane-spanning segment. The Periplasmic portion of the chain corresponds to 114-121 (FPWATSGI). A helical transmembrane segment spans residues 122–142 (AIMWVMIFLNGWFQGMGWPPC). Topologically, residues 143 to 161 (GRTMVHWWSKSERGTIVSI) are cytoplasmic. Residues 162 to 181 (WNTAHNIGGMVPGAMVLLAS) form a helical membrane-spanning segment. Topologically, residues 182-201 (AIFFSTHGIEAQAKDVWQQS) are periplasmic. A helical transmembrane segment spans residues 202-219 (LYFPGIAAMIFAIPVYFV). The Cytoplasmic segment spans residues 220–274 (MRDTPQSCGLPSIEKWRNDYPDDYNEKTYENDLTAKEIFVTYVLKNKLLWYIAIA). A helical membrane pass occupies residues 275–295 (NVFVYLIRYGVLKWSPVYLSE). Residues 296–300 (VKHFN) are Periplasmic-facing. The helical transmembrane segment at 301–321 (IKGTAWAYTIYELAAVPGTLL) threads the bilayer. The Cytoplasmic segment spans residues 322-334 (CGWVSDKVFKGKR). Residues 335 to 354 (GLTGFIFMILTTAAVVAYWM) form a helical membrane-spanning segment. At 355–359 (NPATP) the chain is on the periplasmic side. A helical membrane pass occupies residues 360–396 (EAELANYSAWYENPYQLTDFVLMTLIGFLIYGPVMLI). Over 397–415 (GLHALELAPKKAAGTAAGF) the chain is Cytoplasmic. The chain crosses the membrane as a helical span at residues 416–437 (TGLFGYLGGTVSASAVIGWAAQ). Residues 438–442 (HYGWD) lie on the Periplasmic side of the membrane. A helical transmembrane segment spans residues 443-463 (GGFYVMIGGGVLAVLLLLIVM). Residues 464–479 (VEEGKHKAKLGDTYGT) lie on the Cytoplasmic side of the membrane.

Belongs to the major facilitator superfamily. Organophosphate:Pi antiporter (OPA) (TC 2.A.1.4) family.

Its subcellular location is the cell inner membrane. In terms of biological role, responsible for glycerol-3-phosphate uptake. The protein is Glycerol-3-phosphate transporter (glpT) of Haemophilus influenzae (strain ATCC 51907 / DSM 11121 / KW20 / Rd).